A 213-amino-acid chain; its full sequence is Serine acetyltransferase (213 aa).

Belongs to the transferase hexapeptide repeat family.

It is found in the cytoplasm. The catalysed reaction is L-serine + acetyl-CoA = O-acetyl-L-serine + CoA. It participates in amino-acid biosynthesis; L-cysteine biosynthesis; L-cysteine from L-serine: step 1/2. The polypeptide is Serine acetyltransferase (cysE) (Staphylococcus aureus (strain COL)).